A 162-amino-acid chain; its full sequence is UPF0114 protein VCM66_0196 (162 aa).

A run of 4 helical transmembrane segments spans residues isoleucine 15–phenylalanine 35, leucine 53–valine 73, valine 109–methionine 126, and isoleucine 136–leucine 156.

The protein belongs to the UPF0114 family.

It localises to the cell membrane. The protein is UPF0114 protein VCM66_0196 of Vibrio cholerae serotype O1 (strain M66-2).